Consider the following 406-residue polypeptide: Succinylornithine transaminase (406 aa).

Position 252 is an N6-(pyridoxal phosphate)lysine (lysine 252).

This sequence belongs to the class-III pyridoxal-phosphate-dependent aminotransferase family. AstC subfamily. Requires pyridoxal 5'-phosphate as cofactor.

The enzyme catalyses N(2)-succinyl-L-ornithine + 2-oxoglutarate = N-succinyl-L-glutamate 5-semialdehyde + L-glutamate. It functions in the pathway amino-acid degradation; L-arginine degradation via AST pathway; L-glutamate and succinate from L-arginine: step 3/5. Catalyzes the transamination of N(2)-succinylornithine and alpha-ketoglutarate into N(2)-succinylglutamate semialdehyde and glutamate. Can also act as an acetylornithine aminotransferase. The chain is Succinylornithine transaminase from Escherichia fergusonii (strain ATCC 35469 / DSM 13698 / CCUG 18766 / IAM 14443 / JCM 21226 / LMG 7866 / NBRC 102419 / NCTC 12128 / CDC 0568-73).